The primary structure comprises 159 residues: Cytochrome c-type biogenesis protein CcmE (159 aa).

Topologically, residues 1–8 are cytoplasmic; that stretch reads MNLRRKNR. The helical; Signal-anchor for type II membrane protein transmembrane segment at 9–29 threads the bilayer; that stretch reads LWVVCAVLAGLGLTTALVLYA. At 30-159 the chain is on the periplasmic side; that stretch reads LRANIDLFYT…PQRADKDTSS (130 aa). The disordered stretch occupies residues 129-159; it reads KHDENYTPPEVEKAMQENHRRPQRADKDTSS. His-130 and Tyr-134 together coordinate heme.

It belongs to the CcmE/CycJ family.

It is found in the cell inner membrane. Heme chaperone required for the biogenesis of c-type cytochromes. Transiently binds heme delivered by CcmC and transfers the heme to apo-cytochromes in a process facilitated by CcmF and CcmH. This Salmonella typhimurium (strain LT2 / SGSC1412 / ATCC 700720) protein is Cytochrome c-type biogenesis protein CcmE.